Here is a 242-residue protein sequence, read N- to C-terminus: Glutamate transport ATP-binding protein GluA (242 aa).

Positions 2 to 236 (IKMTGVQKYF…PKSDRAKDFL (235 aa)) constitute an ABC transporter domain. 34 to 41 (GPSGSGKS) contacts ATP.

The protein belongs to the ABC transporter superfamily. In terms of assembly, the complex is composed of two ATP-binding proteins (GluA), two transmembrane proteins (GluC and GluD) and a solute-binding protein (GluB).

Its subcellular location is the cell membrane. The catalysed reaction is a polar amino acid(out) + ATP + H2O = a polar amino acid(in) + ADP + phosphate + H(+). The enzyme catalyses L-glutamate(out) + ATP + H2O = L-glutamate(in) + ADP + phosphate + H(+). Part of the ABC transporter complex GluABCD involved in glutamate uptake. Probably responsible for energy coupling to the transport system. This is Glutamate transport ATP-binding protein GluA from Corynebacterium glutamicum (strain ATCC 13032 / DSM 20300 / JCM 1318 / BCRC 11384 / CCUG 27702 / LMG 3730 / NBRC 12168 / NCIMB 10025 / NRRL B-2784 / 534).